The sequence spans 200 residues: MSSKKIVLTSSDGESFKVEEVVARKLQIVGHIIEDDCATNKIPIPNVTGEILAKVIEYCKKHVEDDDDVVETHESSTKGDKTVEEAKKKPDDVAVPESTEGDDEAEDKKEKLNEWDAKFMKDFDIKTIFDIILAANYLNVQGLFDLCSKTIADYIKDMTPEEVRELFNIENDFTPEEEEAIRNENAWTFEQDGKQQVPKP.

The segment covering 67-92 (DDVVETHESSTKGDKTVEEAKKKPDD) has biased composition (basic and acidic residues). Residues 67 to 109 (DDVVETHESSTKGDKTVEEAKKKPDDVAVPESTEGDDEAEDKK) form a disordered region. The interaction with the F-box domain of F-box proteins stretch occupies residues 132–190 (ILAANYLNVQGLFDLCSKTIADYIKDMTPEEVRELFNIENDFTPEEEEAIRNENAWTFE).

It belongs to the SKP1 family. Part of a SCF (SKP1-cullin-F-box) protein ligase complex. Interacts with CPR1/CPR30. Expressed in leaves and flowers.

The protein resides in the nucleus. The protein operates within protein modification; protein ubiquitination. Its function is as follows. Involved in ubiquitination and subsequent proteasomal degradation of target proteins. Together with CUL1, RBX1 and a F-box protein, it forms a SCF E3 ubiquitin ligase complex. The functional specificity of this complex depends on the type of F-box protein. In the SCF complex, it serves as an adapter that links the F-box protein to CUL1. The chain is SKP1-like protein 19 (ASK19) from Arabidopsis thaliana (Mouse-ear cress).